The following is a 283-amino-acid chain: Gap junction beta-1 protein (283 aa).

The Cytoplasmic portion of the chain corresponds to 1–22; the sequence is MNWTGLYTLLSGVNRHSTAIGR. The helical transmembrane segment at 23 to 45 threads the bilayer; the sequence is VWLSVIFIFRIMVLVVAAESVWG. Topologically, residues 46 to 75 are extracellular; that stretch reads DEKSSFICNTLQPGCNSVCYDQFFPISHVR. A helical transmembrane segment spans residues 76–95; that stretch reads LWSLQLILVSTPALLVAMHV. Residues 96–130 lie on the Cytoplasmic side of the membrane; that stretch reads AHQQHIEKKMLRLEGHGDPLHLEEVKRHKVHISGT. A helical transmembrane segment spans residues 131-153; it reads LWWTYVISVVFRLLFEAVFMYVF. Topologically, residues 154–191 are extracellular; that stretch reads YLLYPGYAMVRLVKCDVYPCPNTVDCFVSRPTEKTVFT. Residues 192 to 214 traverse the membrane as a helical segment; that stretch reads VFMLAASGICIILNVAEVVYLII. Residues 215-283 are Cytoplasmic-facing; that stretch reads RACARRAQRR…AEKSDRCSAC (69 aa). Phosphoserine occurs at positions 233, 258, 266, and 277.

Belongs to the connexin family. Beta-type (group I) subfamily. In terms of assembly, a connexon is composed of a hexamer of connexins. Interacts with CNST.

The protein localises to the cell membrane. Its subcellular location is the cell junction. The protein resides in the gap junction. One gap junction consists of a cluster of closely packed pairs of transmembrane channels, the connexons, through which materials of low MW diffuse from one cell to a neighboring cell. This Homo sapiens (Human) protein is Gap junction beta-1 protein (GJB1).